The chain runs to 457 residues: Argininosuccinate lyase (457 aa).

Belongs to the lyase 1 family. Argininosuccinate lyase subfamily.

It is found in the cytoplasm. The enzyme catalyses 2-(N(omega)-L-arginino)succinate = fumarate + L-arginine. Its pathway is amino-acid biosynthesis; L-arginine biosynthesis; L-arginine from L-ornithine and carbamoyl phosphate: step 3/3. The chain is Argininosuccinate lyase from Escherichia coli O157:H7.